Here is a 294-residue protein sequence, read N- to C-terminus: Sulfotransferase 1E1 (294 aa).

47-52 is a 3'-phosphoadenylyl sulfate binding site; it reads KSGTTW. 105 to 107 contributes to the substrate binding site; the sequence is KTH. Catalysis depends on His-107, which acts as the Proton acceptor. 3'-phosphoadenylyl sulfate contacts are provided by residues Arg-129, Ser-137, Tyr-192, 226–231, and 256–258; these read TSFQEM and RKG.

It belongs to the sulfotransferase 1 family. As to quaternary structure, homodimer. In terms of tissue distribution, liver, intestine and at lower level in the kidney.

Its subcellular location is the cytoplasm. It localises to the cytosol. It catalyses the reaction estrone + 3'-phosphoadenylyl sulfate = estrone 3-sulfate + adenosine 3',5'-bisphosphate + H(+). The catalysed reaction is (24S)-hydroxycholesterol + 3'-phosphoadenylyl sulfate = (24S)-hydroxycholesterol 3-sulfate + adenosine 3',5'-bisphosphate + H(+). The enzyme catalyses 17beta-estradiol + 3'-phosphoadenylyl sulfate = 17beta-estradiol 3-sulfate + adenosine 3',5'-bisphosphate + H(+). It carries out the reaction 3beta-hydroxyandrost-5-en-17-one + 3'-phosphoadenylyl sulfate = dehydroepiandrosterone 3-sulfate + adenosine 3',5'-bisphosphate + H(+). It catalyses the reaction 4-ethylphenol + 3'-phosphoadenylyl sulfate = 4-ethylphenyl sulfate + adenosine 3',5'-bisphosphate + H(+). Inhibited by estradiol. In terms of biological role, sulfotransferase that utilizes 3'-phospho-5'-adenylyl sulfate (PAPS) as sulfonate donor to catalyze the sulfate conjugation of estradiol and estrone. Is a key enzyme in estrogen homeostasis, the sulfation of estrogens leads to their inactivation. Also sulfates dehydroepiandrosterone (DHEA), pregnenolone, (24S)-hydroxycholesterol and xenobiotic compounds like ethinylestradiol, equalenin, diethyl stilbesterol and 1-naphthol at significantly lower efficiency. Does not sulfonate cortisol, testosterone and dopamine. May play a role in gut microbiota-host metabolic interaction. O-sulfonates 4-ethylphenol (4-EP), a dietary tyrosine-derived metabolite produced by gut bacteria. The product 4-EPS crosses the blood-brain barrier and may negatively regulate oligodendrocyte maturation and myelination, affecting the functional connectivity of different brain regions associated with the limbic system. The chain is Sulfotransferase 1E1 (SULT1E1) from Homo sapiens (Human).